Reading from the N-terminus, the 447-residue chain is UDP-glucosyl transferase 79T1 (447 aa).

Histidine 18 acts as the Proton acceptor in catalysis. The Charge relay role is filled by aspartate 116. 6 residues coordinate UDP: serine 265, tryptophan 323, valine 324, histidine 341, threonine 346, and glutamate 349.

It belongs to the UDP-glycosyltransferase family. As to expression, mainly expressed in flowers, flower buds and young leaves, and, to a lesser extent, in old leaves, stems and roots.

The protein operates within secondary metabolite biosynthesis; terpenoid biosynthesis. Functionally, component of the oleanane-type triterpene saponins (e.g. saponarioside A and saponarioside B) biosynthetic pathway, leading to the production of natural products with detergent properties used as traditional sources of soap. A glycosyltransferase that mediates the conversion of QA-triF to QA-triFR via the elongation of the C-28 sugar chain with a deoxyhexose on the D-fucose moiety. This Saponaria officinalis (Common soapwort) protein is UDP-glucosyl transferase 79T1.